The primary structure comprises 163 residues: Nucleotide-binding protein BC_1159 (163 aa).

Belongs to the YajQ family.

Its function is as follows. Nucleotide-binding protein. This is Nucleotide-binding protein BC_1159 from Bacillus cereus (strain ATCC 14579 / DSM 31 / CCUG 7414 / JCM 2152 / NBRC 15305 / NCIMB 9373 / NCTC 2599 / NRRL B-3711).